The following is a 720-amino-acid chain: NADH-ubiquinone oxidoreductase 78 kDa subunit, mitochondrial (720 aa).

A mitochondrion-targeting transit peptide spans 1–23; it reads MNSIKSHILRSSKRYISASSKRL. A 2Fe-2S ferredoxin-type domain is found at 24–102; the sequence is AEVEVTVDGR…GMVVHTDSER (79 aa). Cysteine 58, cysteine 69, cysteine 72, and cysteine 86 together coordinate [2Fe-2S] cluster. Residues 102–141 enclose the 4Fe-4S His(Cys)3-ligated-type domain; the sequence is RIKKAREGVTEMLLENHPLDCPVCDQGGECDLQEQSQRYG. A 4Fe-4S Mo/W bis-MGD-type domain is found at 241-297; that stretch reads LKRTETIDVLDAVGSNIRVDTRGIEVMRVLPRLNDDVNEEWISDKTRFACDGLKTQR.

This sequence belongs to the complex I 75 kDa subunit family. In terms of assembly, core subunit of respiratory chain NADH dehydrogenase (Complex I) which is composed of 45 different subunits. This is the largest subunit of complex I and it is a component of the iron-sulfur (IP) fragment of the enzyme. The cofactor is [2Fe-2S] cluster. Requires [4Fe-4S] cluster as cofactor.

The protein resides in the mitochondrion. It carries out the reaction a ubiquinone + NADH + 5 H(+)(in) = a ubiquinol + NAD(+) + 4 H(+)(out). Core subunit of the mitochondrial membrane respiratory chain NADH dehydrogenase (Complex I) which catalyzes electron transfer from NADH through the respiratory chain, using ubiquinone as an electron acceptor. Essential for catalysing the entry and efficient transfer of electrons within complex I. Plays a key role in the assembly and stability of complex I and participates in the association of complex I with ubiquinol-cytochrome reductase complex (Complex III) to form supercomplexes. Plays a role in cell wall integrity and is involved in osmotic and oxidative resistance, yeast to hypha transition, and the ability to damage and invade oral epithelial cells. This Candida albicans (strain SC5314 / ATCC MYA-2876) (Yeast) protein is NADH-ubiquinone oxidoreductase 78 kDa subunit, mitochondrial.